The following is a 420-amino-acid chain: Gamma-glutamyl phosphate reductase (420 aa).

It belongs to the gamma-glutamyl phosphate reductase family.

Its subcellular location is the cytoplasm. The enzyme catalyses L-glutamate 5-semialdehyde + phosphate + NADP(+) = L-glutamyl 5-phosphate + NADPH + H(+). It participates in amino-acid biosynthesis; L-proline biosynthesis; L-glutamate 5-semialdehyde from L-glutamate: step 2/2. Catalyzes the NADPH-dependent reduction of L-glutamate 5-phosphate into L-glutamate 5-semialdehyde and phosphate. The product spontaneously undergoes cyclization to form 1-pyrroline-5-carboxylate. This chain is Gamma-glutamyl phosphate reductase, found in Neisseria gonorrhoeae (strain ATCC 700825 / FA 1090).